Here is a 420-residue protein sequence, read N- to C-terminus: F-box protein At5g07610 (420 aa).

A disordered region spans residues 1-25 (MSSCSRTRTKAPRSARSRRNGGFSS). A compositionally biased stretch (basic residues) spans 7 to 19 (TRTKAPRSARSRR). The F-box domain maps to 27 to 77 (SATIVADIDDVLIQILSFLPIKTLLRFKRVSKRWLSLITNPVFSNRVIKSN).

The sequence is that of F-box protein At5g07610 from Arabidopsis thaliana (Mouse-ear cress).